A 968-amino-acid chain; its full sequence is RNA polymerase-associated protein RapA (968 aa).

The region spanning 163-332 (EVGQRFAPRV…FARLRLLDPD (170 aa)) is the Helicase ATP-binding domain. An ATP-binding site is contributed by 176-183 (DEVGLGKT). The short motif at 278-281 (DEAH) is the DEAH box element. A Helicase C-terminal domain is found at 491-678 (RVDWLIDFLK…NTKSRYQELK (188 aa)).

It belongs to the SNF2/RAD54 helicase family. RapA subfamily. Interacts with the RNAP. Has a higher affinity for the core RNAP than for the holoenzyme. Its ATPase activity is stimulated by binding to RNAP.

Functionally, transcription regulator that activates transcription by stimulating RNA polymerase (RNAP) recycling in case of stress conditions such as supercoiled DNA or high salt concentrations. Probably acts by releasing the RNAP, when it is trapped or immobilized on tightly supercoiled DNA. Does not activate transcription on linear DNA. Probably not involved in DNA repair. This is RNA polymerase-associated protein RapA from Shewanella piezotolerans (strain WP3 / JCM 13877).